We begin with the raw amino-acid sequence, 179 residues long: Large ribosomal subunit protein uL5 (179 aa).

Belongs to the universal ribosomal protein uL5 family. As to quaternary structure, part of the 50S ribosomal subunit; part of the 5S rRNA/L5/L18/L25 subcomplex. Contacts the 5S rRNA and the P site tRNA. Forms a bridge to the 30S subunit in the 70S ribosome.

In terms of biological role, this is one of the proteins that bind and probably mediate the attachment of the 5S RNA into the large ribosomal subunit, where it forms part of the central protuberance. In the 70S ribosome it contacts protein S13 of the 30S subunit (bridge B1b), connecting the 2 subunits; this bridge is implicated in subunit movement. Contacts the P site tRNA; the 5S rRNA and some of its associated proteins might help stabilize positioning of ribosome-bound tRNAs. The chain is Large ribosomal subunit protein uL5 from Albidiferax ferrireducens (strain ATCC BAA-621 / DSM 15236 / T118) (Rhodoferax ferrireducens).